A 190-amino-acid polypeptide reads, in one-letter code: Orotate phosphoribosyltransferase (190 aa).

Position 114 to 122 (114 to 122) interacts with 5-phospho-alpha-D-ribose 1-diphosphate; the sequence is EDVVTTGGS. Residues threonine 118 and arginine 146 each contribute to the orotate site.

Belongs to the purine/pyrimidine phosphoribosyltransferase family. PyrE subfamily. Homodimer. Mg(2+) serves as cofactor.

The enzyme catalyses orotidine 5'-phosphate + diphosphate = orotate + 5-phospho-alpha-D-ribose 1-diphosphate. It functions in the pathway pyrimidine metabolism; UMP biosynthesis via de novo pathway; UMP from orotate: step 1/2. Its function is as follows. Catalyzes the transfer of a ribosyl phosphate group from 5-phosphoribose 1-diphosphate to orotate, leading to the formation of orotidine monophosphate (OMP). In Caldanaerobacter subterraneus subsp. tengcongensis (strain DSM 15242 / JCM 11007 / NBRC 100824 / MB4) (Thermoanaerobacter tengcongensis), this protein is Orotate phosphoribosyltransferase.